The primary structure comprises 563 residues: Phosphomethylpyrimidine synthase (563 aa).

The segment at 95-115 is disordered; the sequence is PGKNPSPMNNRTPVRAKQGKS. Substrate contacts are provided by residues N200, M229, Y258, H294, 314-316, 355-358, and E394; these read SRG and DALR. H398 contacts Zn(2+). Substrate is bound at residue Y421. Position 462 (H462) interacts with Zn(2+). [4Fe-4S] cluster is bound by residues C544, C547, and C552.

The protein belongs to the ThiC family. The cofactor is [4Fe-4S] cluster.

It catalyses the reaction 5-amino-1-(5-phospho-beta-D-ribosyl)imidazole + S-adenosyl-L-methionine = 4-amino-2-methyl-5-(phosphooxymethyl)pyrimidine + CO + 5'-deoxyadenosine + formate + L-methionine + 3 H(+). The protein operates within cofactor biosynthesis; thiamine diphosphate biosynthesis. Functionally, catalyzes the synthesis of the hydroxymethylpyrimidine phosphate (HMP-P) moiety of thiamine from aminoimidazole ribotide (AIR) in a radical S-adenosyl-L-methionine (SAM)-dependent reaction. The sequence is that of Phosphomethylpyrimidine synthase from Chlorobium phaeobacteroides (strain BS1).